Here is a 185-residue protein sequence, read N- to C-terminus: Protein PBP4 (185 aa).

Low complexity-rich tracts occupy residues 1–24 (MTTT…LSAS) and 46–62 (AQAA…QQQQ). 2 disordered regions span residues 1 to 116 (MTTT…YNRE) and 147 to 168 (ETAS…SKNK). Composition is skewed to polar residues over residues 73–83 (PANTKTKTIAS), 91–102 (KGSSTANGSSTN), and 147–166 (ETAS…SSSK).

Interacts with IGO1, LSM12 and PBP1.

The protein resides in the cytoplasm. Its subcellular location is the nucleus. The polypeptide is Protein PBP4 (PBP4) (Saccharomyces cerevisiae (strain ATCC 204508 / S288c) (Baker's yeast)).